The chain runs to 296 residues: Protoheme IX farnesyltransferase (296 aa).

8 helical membrane passes run 8–28 (VTKPGIIMGNLISVAGGFFLA), 35–55 (WILMLATVIGLSLVVASGCAI), 84–104 (AAFFHGIVLGVIGFALLSYFT), 107–127 (VAVAFAAFGYVVYVGLYTMYF), 132–152 (VYGTFVGSLSGAVPPVVGYCA), 162–182 (AILLTMFCIWQMPHSYAIAIF), 215–235 (FAVVAALLPLTGYVGIGFMVV), and 264–284 (VFFFSIITVTALSVTMALDFN).

The protein belongs to the UbiA prenyltransferase family. Protoheme IX farnesyltransferase subfamily.

It is found in the cell inner membrane. The catalysed reaction is heme b + (2E,6E)-farnesyl diphosphate + H2O = Fe(II)-heme o + diphosphate. The protein operates within porphyrin-containing compound metabolism; heme O biosynthesis; heme O from protoheme: step 1/1. Functionally, converts heme B (protoheme IX) to heme O by substitution of the vinyl group on carbon 2 of heme B porphyrin ring with a hydroxyethyl farnesyl side group. This Marinomonas sp. (strain MWYL1) protein is Protoheme IX farnesyltransferase.